Consider the following 433-residue polypeptide: Myricetin 3-O-glucosyl 1,2-rhamnoside 6'-O-caffeoyltransferase AT2 (433 aa).

Catalysis depends on proton acceptor residues His-157 and Asp-375.

It belongs to the plant acyltransferase family. Expressed in young cromes.

It catalyses the reaction myricetin 3-O-[beta-D-glucosyl-(1-&gt;2)-alpha-L-rhamnoside] + (E)-caffeoyl-CoA = myricetin 3-O-[(6-O-(E)-caffeoyl-beta-D-glucosyl)-(1-&gt;2)-alpha-L-rhamnoside] + CoA. Its pathway is flavonoid metabolism. In terms of biological role, caffeoyltransferase involved in montbretin A (MbA) biosynthesis. Catalyzes the caffeoylation of myricetin 3-O-beta-D-glucosyl 1,2-alpha-L-rhamnoside (MRG) to produce myricetin 3-O-(6'-O-caffeoyl)-beta-D-glucosyl 1,2-alpha-L-rhamnoside (mini-MbA), a precursor of MbA. Mini-MbA and MbA are potent inhibitors of human pancreatic alpha-amylase and are being developed as drug candidates to treat type-2 diabetes. In vitro, is able to catalyze the caffeoylation of quercetin 3-O-sophoroside (QGG), although QGG may not be a physiological substrate in vivo. In vitro, can use coumaryl-CoA, feruloyl-CoA and acetyl-CoA, although these three acyl donors may not be physiological in vivo. This chain is Myricetin 3-O-glucosyl 1,2-rhamnoside 6'-O-caffeoyltransferase AT2, found in Crocosmia x crocosmiiflora (Montbretia).